The following is a 635-amino-acid chain: MITITLPDGSRREFEGPVSVMQVAHAIGPGLAKATIAGQIDGGHLVDASDLIEHDAILRIITPEDQEALEIIRHSCAHLVGHAVKQLYPEAKMVIGPVIADGFYYDIYSKRPFTPEDLAAIEQRMVELIAQDYDVVKHITARHDVVRLFKERGEDYKLRLIEDMGPEVTAMGIYHHQEYVDMCRGPHVPNTRFLKAFRLTRISGAYWRGDTKNEQLQRIYGTAWADKKQLEAYMQRLQDAEKRDHRKIGKAQDLFHLQEEGPGLVFWHPKGWVIWQTIENYIRRVYRNSGYGELRCPQILDVSLWQKSGHWDNYKENMFFTDSEKRTYAVKPMNCPGHVQVFNQGLHSYRDLPIRYGEFGACHRNEPSGALHGLLRVRGFTQDDGHIFCTEAQIEAEVTAFHRQALQVYADFGFENIQIKIALRPDKRLGDSLSWDKAEAALRAALSACEVEWQELPGEGAFYGPKIEYHLKDAIGRTWQLGTIQVDFMMPGRLGAEYVDERSQRRHPVMLHRAIVGSMERFIGILIEHYAGIWPTWLAPVQVVIANITDAQYEYAEQVHKALLNQGFRVNIDLRNEKIGYKIREHTLQRVPYLLVVGDREKENGTVAVRTCSREDLGAMSISAFVERLQTEQVV.

Positions 1-62 (MITITLPDGS…EHDAILRIIT (62 aa)) constitute a TGS domain. Positions 244–535 (DHRKIGKAQD…LIEHYAGIWP (292 aa)) are catalytic. Zn(2+) contacts are provided by cysteine 335, histidine 386, and histidine 512.

Belongs to the class-II aminoacyl-tRNA synthetase family. As to quaternary structure, homodimer. It depends on Zn(2+) as a cofactor.

It localises to the cytoplasm. The catalysed reaction is tRNA(Thr) + L-threonine + ATP = L-threonyl-tRNA(Thr) + AMP + diphosphate + H(+). In terms of biological role, catalyzes the attachment of threonine to tRNA(Thr) in a two-step reaction: L-threonine is first activated by ATP to form Thr-AMP and then transferred to the acceptor end of tRNA(Thr). Also edits incorrectly charged L-seryl-tRNA(Thr). The protein is Threonine--tRNA ligase of Xylella fastidiosa (strain M12).